A 467-amino-acid chain; its full sequence is Transcriptional regulator of yeast form adherence 6 (467 aa).

A compositionally biased stretch (polar residues) spans 43–52 (NTSDAGSIPT). Disordered stretches follow at residues 43–83 (NTSD…NIDS), 128–149 (GSSG…NSNN), 245–275 (ESPE…SNSS), 312–365 (NNQL…SGSK), and 390–439 (STLN…DNDR). The 82-residue stretch at 92–173 (ETKQLHSIIE…KSSVEYILYL (82 aa)) folds into the bHLH domain. Low complexity-rich tracts occupy residues 257–275 (VSET…SNSS) and 312–322 (NNQLNNRKNSN). Positions 323 to 338 (PISPQTVCIKSQNPSP) are enriched in polar residues. Positions 345–365 (SSLSTSIVNSPSSSSSLSGSK) are enriched in low complexity. Positions 417 to 432 (GSANTETVNSGSASSD) are enriched in polar residues.

It localises to the nucleus. In terms of biological role, transcription factor required for yeast cell adherence to silicone substrate. The chain is Transcriptional regulator of yeast form adherence 6 (TRY6) from Candida albicans (strain SC5314 / ATCC MYA-2876) (Yeast).